Here is a 338-residue protein sequence, read N- to C-terminus: 2-oxoglutarate-dependent dioxygenase ecdG (338 aa).

A Fe2OG dioxygenase domain is found at 165-273 (PSVTNLGFLR…KYTLAYFVRP (109 aa)). Positions 190, 192, and 249 each coordinate Fe cation. Lysine 264 lines the 2-oxoglutarate pocket.

Belongs to the iron/ascorbate-dependent oxidoreductase family. The cofactor is Fe(2+).

Its pathway is antifungal biosynthesis. Functionally, 2-oxoglutarate-dependent dioxygenase; part of the gene cluster that mediates the biosynthesis of echinocandin B, a fungal lipidated cyclic hexapeptide that acts as an antifungal agent. Linoleoyl-AMP, produced by the fatty-acyl-AMP ligase ecdI, is transferred to the initiation carrier domain (T0) of ecdA. The linoleoyl-S-phosphopantetheinyl-T0 is sequentially extended with L-ornithine, L-threonine, L-proline, L-homotyrosine, L-threonine, and 4R-methyl-L-proline to form the linear hexapeptide. Thereafter, the terminal condensation (C7) performs macrocyclization of the NRPS product and the cyclic scaffold is released from ecdA. All six of the amino acid residues are hydroxylated, including 4R,5R-dihydroxy-L-ornithine, 4R-hydroxyl-L-proline, 3S,4S-dihydroxy-L-homotyrosine, and 3S-hydroxyl-4S-methyl-L-prolin. In the pathway, all the hydroxylation reactions are proposed to occur following completion of the cyclic peptide, so the unhydroxylated precursor produced by ecdA will undergo six rounds of hydroxylation. Five hydroxylase genes (ecdG, ecdH, ecdK, htyE and htyF) are embedded within the echinocandin B (ecd) and L-homotyrosine (hty) clusters. This chain is 2-oxoglutarate-dependent dioxygenase ecdG, found in Aspergillus rugulosus (Emericella rugulosa).